Consider the following 419-residue polypeptide: Ubiquitin receptor RAD23c (419 aa).

Residues Met1–Pro79 enclose the Ubiquitin-like domain. Residues Ala83–Val118 are compositionally biased toward low complexity. Positions Ala83–Asp172 are disordered. Positions Ala119–Ala135 are enriched in pro residues. The span at Pro136 to Pro146 shows a compositional bias: low complexity. The region spanning Ser185–Gly228 is the UBA 1 domain. Residues Val235–Gly282 form a disordered region. Residues Ala245–Pro270 show a composition bias toward low complexity. Residues Gly288–Ile331 enclose the STI1 domain. Residues Thr372–His413 form the UBA 2 domain.

It belongs to the RAD23 family. Interacts with 'Lys-48'-linked polyubiquitin chains via its both UBA domains. Interacts with RPN10 via its ubiquitin-like domain. As to expression, widely expressed in the whole plant.

It localises to the nucleus. It is found in the cytoplasm. May be involved in nucleotide excision repair. Binds and presumably selects ubiquitin-conjugates for destruction. Prefers multiubiquitin chains rather than single ubiquitins, with a binding affinity for 'Lys-48'-linked ubiquitin chains. Acts as a ubiquitin receptor that associates with the 26S proteasomal docking subunit RPN10 for the indirect recognition of ubiquitinated substrates of ubiquitin/26S proteasome-mediated proteolysis (UPP). Involved in UV tolerance in hypocotyls, specifically in dark conditions. The protein is Ubiquitin receptor RAD23c of Arabidopsis thaliana (Mouse-ear cress).